The primary structure comprises 659 residues: tRNA-guanine(15) transglycosylase (659 aa).

Asp-84 (nucleophile) is an active-site residue. Substrate-binding residues include Asp-119 and Ala-190. Positions 273, 275, and 278 each coordinate Zn(2+). The PUA domain maps to 583-658; sequence KNRVVVNKDS…QAIKTRKGMK (76 aa).

The protein belongs to the archaeosine tRNA-ribosyltransferase family. It depends on Zn(2+) as a cofactor.

It carries out the reaction guanosine(15) in tRNA + 7-cyano-7-deazaguanine = 7-cyano-7-carbaguanosine(15) in tRNA + guanine. Its pathway is tRNA modification; archaeosine-tRNA biosynthesis. Its function is as follows. Exchanges the guanine residue with 7-cyano-7-deazaguanine (preQ0) at position 15 in the dihydrouridine loop (D-loop) of archaeal tRNAs. This chain is tRNA-guanine(15) transglycosylase, found in Methanobrevibacter smithii (strain ATCC 35061 / DSM 861 / OCM 144 / PS).